We begin with the raw amino-acid sequence, 316 residues long: Cytochrome c biogenesis protein CcsA (316 aa).

7 consecutive transmembrane segments (helical) span residues 15-35 (FSICSIVITIRLINLVVTTIL), 44-64 (GIITTFLCLTGFLVTRWIYSG), 71-91 (LYESLIFLSWSFSLIHIVAYL), 142-162 (MILSYAALLCGSLLSAALLVI), 220-240 (VISLGFIFLTMGILSGAVWAN), 247-267 (WSWDPKETWAFITWIIFAIYL), and 281-301 (AIVAVIGFLIIWICYFGVNLL).

This sequence belongs to the CcmF/CycK/Ccl1/NrfE/CcsA family. As to quaternary structure, may interact with Ccs1.

Its subcellular location is the plastid. The protein resides in the chloroplast thylakoid membrane. In terms of biological role, required during biogenesis of c-type cytochromes (cytochrome c6 and cytochrome f) at the step of heme attachment. The protein is Cytochrome c biogenesis protein CcsA of Trachelium caeruleum (Blue throatwort).